An 89-amino-acid polypeptide reads, in one-letter code: Protein S100-A8 (89 aa).

EF-hand domains lie at 13–48 (IDVY…FVQN) and 46–81 (VQNI…VGVA). Zn(2+) is bound by residues H17 and H27. Residue D33 coordinates Ca(2+). C42 carries the post-translational modification S-nitrosocysteine. Residues D59, N61, D63, and E70 each coordinate Ca(2+). H83 serves as a coordination point for Zn(2+).

It belongs to the S-100 family. Homodimer. Preferentially exists as a heterodimer or heterotetramer with S100A9 known as calprotectin (S100A8/A9). Calprotectin (S100A8/9) interacts with CEACAM3 and tubulin filaments in a calcium-dependent manner. Heterotetrameric calprotectin (S100A8/A9) interacts with ANXA6 and associates with tubulin filaments in activated monocytes. S100A8 and calprotectin (S100A8/9) interact with NCF2/P67PHOX, RAC1 and RAC2. Calprotectin (S100A8/9) interacts with CYBA and CYBB. S100A8 interacts with AGER, ATP2A2 and with the heterodimeric complex formed by TLR4 and LY96. Calprotectin (S100A8/9) interacts with NOS2 to form the iNOS-S100A8/A9 transnitrosylase complex. Calprotectin (S100A8/9) interacts with CD69.

The protein localises to the secreted. It localises to the cytoplasm. It is found in the cytoskeleton. Its subcellular location is the cell membrane. With respect to regulation, calprotectin (S100A8/A9) activity on TLR4 signaling is inhibited by paquinimod. S100A8 is a calcium- and zinc-binding protein which plays a prominent role in the regulation of inflammatory processes and immune response. It can induce neutrophil chemotaxis and adhesion. Predominantly found as calprotectin (S100A8/A9) which has a wide plethora of intra- and extracellular functions. The intracellular functions include: facilitating leukocyte arachidonic acid trafficking and metabolism, modulation of the tubulin-dependent cytoskeleton during migration of phagocytes and activation of the neutrophilic NADPH-oxidase. Also participates in regulatory T-cell differentiation together with CD69. Activates NADPH-oxidase by facilitating the enzyme complex assembly at the cell membrane, transferring arachidonic acid, an essential cofactor, to the enzyme complex and S100A8 contributes to the enzyme assembly by directly binding to NCF2/P67PHOX. The extracellular functions involve pro-inflammatory, antimicrobial, oxidant-scavenging and apoptosis-inducing activities. Its pro-inflammatory activity includes recruitment of leukocytes, promotion of cytokine and chemokine production, and regulation of leukocyte adhesion and migration. Acts as an alarmin or a danger associated molecular pattern (DAMP) molecule and stimulates innate immune cells via binding to pattern recognition receptors such as Toll-like receptor 4 (TLR4) and receptor for advanced glycation endproducts (AGER). Binding to TLR4 and AGER activates the MAP-kinase and NF-kappa-B signaling pathways resulting in the amplification of the pro-inflammatory cascade. Has antimicrobial activity towards bacteria and fungi and exerts its antimicrobial activity probably via chelation of Zn(2+) which is essential for microbial growth. Can induce cell death via autophagy and apoptosis and this occurs through the cross-talk of mitochondria and lysosomes via reactive oxygen species (ROS) and the process involves BNIP3. Can regulate neutrophil number and apoptosis by an anti-apoptotic effect; regulates cell survival via ITGAM/ITGB and TLR4 and a signaling mechanism involving MEK-ERK. Its role as an oxidant scavenger has a protective role in preventing exaggerated tissue damage by scavenging oxidants. The iNOS-S100A8/A9 transnitrosylase complex is proposed to direct selective inflammatory stimulus-dependent S-nitrosylation of multiple targets such as GAPDH, ANXA5, EZR, MSN and VIM by recognizing a [IL]-x-C-x-x-[DE] motif; S100A8 seems to contribute to S-nitrosylation site selectivity. Its function is as follows. (Microbial infection) Upon infection by murine coronavirus (MHV-A59), induces expansion of aberrant immature neutrophils in a TLR4-dependent manner. The chain is Protein S100-A8 from Mus musculus (Mouse).